Consider the following 362-residue polypeptide: Putative F-box protein At3g25750 (362 aa).

The F-box domain maps to 4–52 (TEWSDLPEELLDLIANRYSSNIDVLRIRSTCKSWRSAVAMSKERLQFRF).

In Arabidopsis thaliana (Mouse-ear cress), this protein is Putative F-box protein At3g25750.